The sequence spans 157 residues: 6,7-dimethyl-8-ribityllumazine synthase 1 (157 aa).

5-amino-6-(D-ribitylamino)uracil-binding positions include Phe22, 53 to 55 (ALE), and 82 to 84 (TVI). A (2S)-2-hydroxy-3-oxobutyl phosphate-binding site is contributed by 87–88 (ET). The active-site Proton donor is the His90. Asn115 lines the 5-amino-6-(D-ribitylamino)uracil pocket. His129 provides a ligand contact to (2S)-2-hydroxy-3-oxobutyl phosphate.

It belongs to the DMRL synthase family. As to quaternary structure, homopentamer.

It catalyses the reaction (2S)-2-hydroxy-3-oxobutyl phosphate + 5-amino-6-(D-ribitylamino)uracil = 6,7-dimethyl-8-(1-D-ribityl)lumazine + phosphate + 2 H2O + H(+). Its pathway is cofactor biosynthesis; riboflavin biosynthesis; riboflavin from 2-hydroxy-3-oxobutyl phosphate and 5-amino-6-(D-ribitylamino)uracil: step 1/2. In terms of biological role, catalyzes the formation of 6,7-dimethyl-8-ribityllumazine by condensation of 5-amino-6-(D-ribitylamino)uracil with 3,4-dihydroxy-2-butanone 4-phosphate. This is the penultimate step in the biosynthesis of riboflavin. The polypeptide is 6,7-dimethyl-8-ribityllumazine synthase 1 (ribH1) (Brucella abortus (strain 2308)).